The following is a 199-amino-acid chain: Recombination protein RecR (199 aa).

The segment at 58–73 (CSRCFYFTEEDPCPLC) adopts a C4-type zinc-finger fold. The 96-residue stretch at 81–176 (QLICVVEEPQ…KVTRLAHGIP (96 aa)) folds into the Toprim domain.

Belongs to the RecR family.

Functionally, may play a role in DNA repair. It seems to be involved in an RecBC-independent recombinational process of DNA repair. It may act with RecF and RecO. This chain is Recombination protein RecR, found in Syntrophotalea carbinolica (strain DSM 2380 / NBRC 103641 / GraBd1) (Pelobacter carbinolicus).